A 516-amino-acid polypeptide reads, in one-letter code: Cytochrome P450 1A2 (516 aa).

An O-linked (GlcNAc) serine glycan is attached at Ser-69. Phe-226 is a binding site for substrate. Cys-458 is a heme binding site.

This sequence belongs to the cytochrome P450 family. In terms of assembly, interacts with PGRMC1; the interaction requires PGRMC1 homodimerization. It depends on heme as a cofactor.

The protein resides in the endoplasmic reticulum membrane. It localises to the microsome membrane. It catalyses the reaction an organic molecule + reduced [NADPH--hemoprotein reductase] + O2 = an alcohol + oxidized [NADPH--hemoprotein reductase] + H2O + H(+). It carries out the reaction 17beta-estradiol + reduced [NADPH--hemoprotein reductase] + O2 = 2-hydroxy-17beta-estradiol + oxidized [NADPH--hemoprotein reductase] + H2O + H(+). The catalysed reaction is 17beta-estradiol + reduced [NADPH--hemoprotein reductase] + O2 = 4-hydroxy-17beta-estradiol + oxidized [NADPH--hemoprotein reductase] + H2O + H(+). The enzyme catalyses estrone + reduced [NADPH--hemoprotein reductase] + O2 = 2-hydroxyestrone + oxidized [NADPH--hemoprotein reductase] + H2O + H(+). It catalyses the reaction estrone + reduced [NADPH--hemoprotein reductase] + O2 = 4-hydroxyestrone + oxidized [NADPH--hemoprotein reductase] + H2O + H(+). It carries out the reaction cholesterol + reduced [NADPH--hemoprotein reductase] + O2 = 25-hydroxycholesterol + oxidized [NADPH--hemoprotein reductase] + H2O + H(+). The catalysed reaction is all-trans-retinol + reduced [NADPH--hemoprotein reductase] + O2 = all-trans-retinal + oxidized [NADPH--hemoprotein reductase] + 2 H2O + H(+). The enzyme catalyses all-trans-retinal + reduced [NADPH--hemoprotein reductase] + O2 = all-trans-retinoate + oxidized [NADPH--hemoprotein reductase] + H2O + 2 H(+). It catalyses the reaction (5Z,8Z,11Z,14Z)-eicosatetraenoate + reduced [NADPH--hemoprotein reductase] + O2 = (14R,15S)-epoxy-(5Z,8Z,11Z)-eicosatrienoate + oxidized [NADPH--hemoprotein reductase] + H2O + H(+). It carries out the reaction (5Z,8Z,11Z,14Z)-eicosatetraenoate + reduced [NADPH--hemoprotein reductase] + O2 = (14S,15R)-epoxy-(5Z,8Z,11Z)-eicosatrienoate + oxidized [NADPH--hemoprotein reductase] + H2O + H(+). The catalysed reaction is (5Z,8Z,11Z,14Z,17Z)-eicosapentaenoate + reduced [NADPH--hemoprotein reductase] + O2 = (17R,18S)-epoxy-(5Z,8Z,11Z,14Z)-eicosatetraenoate + oxidized [NADPH--hemoprotein reductase] + H2O + H(+). The enzyme catalyses (4Z,7Z,10Z,13Z,16Z,19Z)-docosahexaenoate + reduced [NADPH--hemoprotein reductase] + O2 = (19R,20S)-epoxy-(4Z,7Z,10Z,13Z,16Z)-docosapentaenoate + oxidized [NADPH--hemoprotein reductase] + H2O + H(+). It catalyses the reaction (5S)-hydroperoxy-(6E,8Z,11Z,14Z)-eicosatetraenoate = 5-oxo-(6E,8Z,11Z,14Z)-eicosatetraenoate + H2O. It carries out the reaction (12S)-hydroperoxy-(5Z,8Z,10E,14Z)-eicosatetraenoate = 12-oxo-(5Z,8Z,10E,14Z)-eicosatetraenoate + H2O. The catalysed reaction is (15S)-hydroperoxy-(5Z,8Z,11Z,13E)-eicosatetraenoate = 15-oxo-(5Z,8Z,11Z,13E)-eicosatetraenoate + H2O. The enzyme catalyses (13S)-hydroperoxy-(9Z,11E)-octadecadienoate = 13-oxo-(9Z,11E)-octadecadienoate + H2O. It catalyses the reaction (5Z,8Z,11Z,14Z)-eicosatetraenoate + reduced [NADPH--hemoprotein reductase] + O2 = 13-hydroxy-(5Z,8Z,11Z,14Z)-eicosatetraenoate + oxidized [NADPH--hemoprotein reductase] + H2O + H(+). It carries out the reaction (5Z,8Z,11Z,14Z)-eicosatetraenoate + reduced [NADPH--hemoprotein reductase] + O2 = 19-hydroxy-(5Z,8Z,11Z,14Z)-eicosatetraenoate + oxidized [NADPH--hemoprotein reductase] + H2O + H(+). The catalysed reaction is (9Z,12Z)-octadecadienoate + reduced [NADPH--hemoprotein reductase] + O2 = 11-hydroxy-(9Z,12Z)-octadecadienoate + oxidized [NADPH--hemoprotein reductase] + H2O + H(+). It functions in the pathway cofactor metabolism; retinol metabolism. It participates in steroid metabolism; cholesterol metabolism. The protein operates within lipid metabolism; arachidonate metabolism. Functionally, a cytochrome P450 monooxygenase involved in the metabolism of various endogenous substrates, including fatty acids, steroid hormones and vitamins. Mechanistically, uses molecular oxygen inserting one oxygen atom into a substrate, and reducing the second into a water molecule, with two electrons provided by NADPH via cytochrome P450 reductase (NADPH--hemoprotein reductase). Catalyzes the hydroxylation of carbon-hydrogen bonds. Exhibits high catalytic activity for the formation of hydroxyestrogens from estrone (E1) and 17beta-estradiol (E2), namely 2-hydroxy E1 and E2. Metabolizes cholesterol toward 25-hydroxycholesterol, a physiological regulator of cellular cholesterol homeostasis. May act as a major enzyme for all-trans retinoic acid biosynthesis in the liver. Catalyzes two successive oxidative transformation of all-trans retinol to all-trans retinal and then to the active form all-trans retinoic acid. Primarily catalyzes stereoselective epoxidation of the last double bond of polyunsaturated fatty acids (PUFA), displaying a strong preference for the (R,S) stereoisomer. Catalyzes bisallylic hydroxylation and omega-1 hydroxylation of PUFA. May also participate in eicosanoids metabolism by converting hydroperoxide species into oxo metabolites (lipoxygenase-like reaction, NADPH-independent). Plays a role in the oxidative metabolism of xenobiotics. Catalyzes the N-hydroxylation of heterocyclic amines and the O-deethylation of phenacetin. Metabolizes caffeine via N3-demethylation. The polypeptide is Cytochrome P450 1A2 (CYP1A2) (Callithrix jacchus (White-tufted-ear marmoset)).